We begin with the raw amino-acid sequence, 194 residues long: Ribose 1,5-bisphosphate phosphokinase PhnN (194 aa).

Position 24–31 (24–31 (GPSGAGKD)) interacts with ATP.

Belongs to the ribose 1,5-bisphosphokinase family.

The catalysed reaction is alpha-D-ribose 1,5-bisphosphate + ATP = 5-phospho-alpha-D-ribose 1-diphosphate + ADP. It functions in the pathway metabolic intermediate biosynthesis; 5-phospho-alpha-D-ribose 1-diphosphate biosynthesis; 5-phospho-alpha-D-ribose 1-diphosphate from D-ribose 5-phosphate (route II): step 3/3. Its function is as follows. Catalyzes the phosphorylation of ribose 1,5-bisphosphate to 5-phospho-D-ribosyl alpha-1-diphosphate (PRPP). The chain is Ribose 1,5-bisphosphate phosphokinase PhnN from Rhodopseudomonas palustris (strain ATCC BAA-98 / CGA009).